The primary structure comprises 310 residues: Conjugation stage-specific protein (310 aa).

The protein belongs to the archaeal Rpo3/eukaryotic RPB3 RNA polymerase subunit family.

The protein localises to the nucleus. Functionally, may be a stage-specific RNA polymerase subunit. The polypeptide is Conjugation stage-specific protein (CNJC) (Tetrahymena thermophila).